A 97-amino-acid polypeptide reads, in one-letter code: Putative pterin-4-alpha-carbinolamine dehydratase (97 aa).

The protein belongs to the pterin-4-alpha-carbinolamine dehydratase family.

The enzyme catalyses (4aS,6R)-4a-hydroxy-L-erythro-5,6,7,8-tetrahydrobiopterin = (6R)-L-erythro-6,7-dihydrobiopterin + H2O. This Phenylobacterium zucineum (strain HLK1) protein is Putative pterin-4-alpha-carbinolamine dehydratase.